Here is a 158-residue protein sequence, read N- to C-terminus: 2-C-methyl-D-erythritol 2,4-cyclodiphosphate synthase (158 aa).

Residues Asp-9 and His-11 each contribute to the a divalent metal cation site. Residues 9-11 (DVH) and 35-36 (HS) each bind 4-CDP-2-C-methyl-D-erythritol 2-phosphate. A divalent metal cation is bound at residue His-43. 4-CDP-2-C-methyl-D-erythritol 2-phosphate contacts are provided by residues 57-59 (DIG), 62-66 (FPDTD), 133-136 (TTTE), Phe-140, and Arg-143.

This sequence belongs to the IspF family. As to quaternary structure, homotrimer. Requires a divalent metal cation as cofactor.

The catalysed reaction is 4-CDP-2-C-methyl-D-erythritol 2-phosphate = 2-C-methyl-D-erythritol 2,4-cyclic diphosphate + CMP. The protein operates within isoprenoid biosynthesis; isopentenyl diphosphate biosynthesis via DXP pathway; isopentenyl diphosphate from 1-deoxy-D-xylulose 5-phosphate: step 4/6. Functionally, involved in the biosynthesis of isopentenyl diphosphate (IPP) and dimethylallyl diphosphate (DMAPP), two major building blocks of isoprenoid compounds. Catalyzes the conversion of 4-diphosphocytidyl-2-C-methyl-D-erythritol 2-phosphate (CDP-ME2P) to 2-C-methyl-D-erythritol 2,4-cyclodiphosphate (ME-CPP) with a corresponding release of cytidine 5-monophosphate (CMP). This chain is 2-C-methyl-D-erythritol 2,4-cyclodiphosphate synthase, found in Haemophilus influenzae (strain 86-028NP).